The sequence spans 988 residues: Mediator of RNA polymerase II transcription subunit 24 (988 aa).

6 consecutive short sequence motifs (LXXLL motif) follow at residues 128–132 (LNWLL), 341–345 (LTPLL), 445–449 (LDLLL), 555–559 (LVALL), 786–790 (LPSLL), and 856–860 (LMRLL).

This sequence belongs to the Mediator complex subunit 24 family. Component of the Mediator complex.

It localises to the nucleus. In terms of biological role, component of the Mediator complex, a coactivator involved in the regulated transcription of nearly all RNA polymerase II-dependent genes. Mediator functions as a bridge to convey information from gene-specific regulatory proteins to the basal RNA polymerase II transcription machinery. Mediator is recruited to promoters by direct interactions with regulatory proteins and serves as a scaffold for the assembly of a functional preinitiation complex with RNA polymerase II and the general transcription factors. This is Mediator of RNA polymerase II transcription subunit 24 (med24) from Xenopus laevis (African clawed frog).